The sequence spans 364 residues: Rhomboid domain-containing protein 2 (364 aa).

5 helical membrane passes run 11-31 (WCLC…SLLV), 63-83 (LVTY…AIII), 100-120 (CFFT…FEAV), 158-178 (FGMV…SWLI), and 184-204 (LSNV…CYSI). Disordered regions lie at residues 242–282 (AQSR…KLAS) and 317–364 (SSVY…VPMP). Polar residues-rich tracts occupy residues 267–276 (HPVSQTQHAS) and 317–329 (SSVY…TSLG).

The protein belongs to the peptidase S54 family.

The protein localises to the golgi apparatus. It localises to the cis-Golgi network membrane. The sequence is that of Rhomboid domain-containing protein 2 (RHBDD2) from Homo sapiens (Human).